We begin with the raw amino-acid sequence, 158 residues long: Mitotic-spindle organizing protein 2A (158 aa).

Ser-34 carries the post-translational modification Phosphoserine. A disordered region spans residues 84 to 158 (RLASEPQDPA…PGKSPTQGST (75 aa)). Residues 112-122 (SAALGGVLALA) are compositionally biased toward low complexity. Positions 128-140 (EGSSQRMPRQPSA) are enriched in polar residues. A Phosphoserine modification is found at Ser-152.

It belongs to the MOZART2 family. Associates with the gamma-tubulin ring complex (gTuRC) consisting of TUBGCP2, TUBGCP3, TUBGCP4, TUBGCP5 and TUBGCP6 and gamma-tubulin TUBG1 or TUBG2; within the complex, interacts with TUBGCP2; the interaction plays a role in gTuRC activation.

The protein resides in the cytoplasm. It localises to the cytoskeleton. The protein localises to the microtubule organizing center. It is found in the centrosome. Its subcellular location is the spindle. Required for the recruitment and the assembly of the gamma-tubulin ring complex (gTuRC) at the centrosome. The gTuRC regulates the minus-end nucleation of alpha-beta tubulin heterodimers that grow into microtubule protafilaments, a critical step in centrosome duplication and spindle formation. The chain is Mitotic-spindle organizing protein 2A (MZT2A) from Homo sapiens (Human).